Consider the following 544-residue polypeptide: Flagellar hook-associated protein 1 (544 aa).

It belongs to the flagella basal body rod proteins family.

It localises to the secreted. The protein localises to the bacterial flagellum. The sequence is that of Flagellar hook-associated protein 1 (flgK) from Buchnera aphidicola subsp. Schizaphis graminum (strain Sg).